We begin with the raw amino-acid sequence, 108 residues long: Large ribosomal subunit protein uL24 (108 aa).

A disordered region spans residues 46-65; the sequence is RHTRVQQSSRGSQSGGIVTQ. Low complexity predominate over residues 51–61; sequence QQSSRGSQSGG.

Belongs to the universal ribosomal protein uL24 family. As to quaternary structure, part of the 50S ribosomal subunit.

One of two assembly initiator proteins, it binds directly to the 5'-end of the 23S rRNA, where it nucleates assembly of the 50S subunit. Its function is as follows. One of the proteins that surrounds the polypeptide exit tunnel on the outside of the subunit. The chain is Large ribosomal subunit protein uL24 from Parafrankia sp. (strain EAN1pec).